A 508-amino-acid polypeptide reads, in one-letter code: Transposase (508 aa).

The HTH IS21-type domain occupies 3–65 (LLSVIRRWHF…PFADRLSAWL (63 aa)). The Integrase catalytic domain maps to 124–299 (LAFEPGEAFQ…TIADIWVEEV (176 aa)).

It belongs to the transposase IS21/IS408/IS1162 family.

In terms of biological role, required for the transposition of the insertion element. The sequence is that of Transposase (nmoT) from Aminobacter aminovorans (Chelatobacter heintzii).